We begin with the raw amino-acid sequence, 454 residues long: Photosystem II CP47 reaction center protein (454 aa).

6 consecutive transmembrane segments (helical) span residues M6–I26, I47–W61, G86–F102, I149–S164, V183–V198, and S403–R418.

This sequence belongs to the PsbB/PsbC family. PsbB subfamily. In terms of assembly, PSII is composed of 1 copy each of membrane proteins PsbA, PsbB, PsbC, PsbD, PsbE, PsbF, PsbH, PsbI, PsbJ, PsbK, PsbL, PsbM, PsbT, PsbX, PsbY, PsbZ, Psb30/Ycf12, at least 3 peripheral proteins of the oxygen-evolving complex and a large number of cofactors. It forms dimeric complexes. Binds multiple chlorophylls. PSII binds additional chlorophylls, carotenoids and specific lipids. serves as cofactor.

It localises to the plastid. The protein resides in the chloroplast thylakoid membrane. Functionally, one of the components of the core complex of photosystem II (PSII). It binds chlorophyll and helps catalyze the primary light-induced photochemical processes of PSII. PSII is a light-driven water:plastoquinone oxidoreductase, using light energy to abstract electrons from H(2)O, generating O(2) and a proton gradient subsequently used for ATP formation. The sequence is that of Photosystem II CP47 reaction center protein from Ostreococcus tauri.